The chain runs to 127 residues: Major sperm protein 49 (127 aa).

An N-acetylalanine modification is found at Ala2. In terms of domain architecture, MSP spans Asp9–Asn126.

As to expression, sperm.

It is found in the cell projection. Its subcellular location is the pseudopodium. The protein localises to the cytoplasm. It localises to the cytoskeleton. In terms of biological role, central component in molecular interactions underlying sperm crawling. Forms an extensive filament system that extends from sperm villipoda, along the leading edge of the pseudopod. This is Major sperm protein 49 (msp-49) from Caenorhabditis elegans.